Here is a 362-residue protein sequence, read N- to C-terminus: Probable cinnamyl alcohol dehydrogenase 8D (362 aa).

Cys45 is a binding site for Zn(2+). Thr47 is an NADP(+) binding site. Zn(2+) is bound by residues His67, Glu68, Cys98, Cys101, Cys104, Cys112, and Cys161. NADP(+) contacts are provided by residues Thr165, 186–191 (GLGGLG), 209–214 (SSSPAK), Thr249, Gly273, and 296–298 (NGV).

This sequence belongs to the zinc-containing alcohol dehydrogenase family. In terms of assembly, homodimer. Zn(2+) is required as a cofactor.

It catalyses the reaction (E)-cinnamyl alcohol + NADP(+) = (E)-cinnamaldehyde + NADPH + H(+). It carries out the reaction (E)-coniferol + NADP(+) = (E)-coniferaldehyde + NADPH + H(+). The enzyme catalyses (E)-sinapyl alcohol + NADP(+) = (E)-sinapaldehyde + NADPH + H(+). The catalysed reaction is (E)-4-coumaroyl alcohol + NADP(+) = (E)-4-coumaraldehyde + NADPH + H(+). It catalyses the reaction (E)-caffeyl alcohol + NADP(+) = (E)-caffeyl aldehyde + NADPH + H(+). Its pathway is aromatic compound metabolism; phenylpropanoid biosynthesis. Involved in lignin biosynthesis. Catalyzes the final step specific for the production of lignin monomers. Catalyzes the NADPH-dependent reduction of coniferaldehyde, 5-hydroxyconiferaldehyde, sinapaldehyde, 4-coumaraldehyde and caffeyl aldehyde to their respective alcohols. The protein is Probable cinnamyl alcohol dehydrogenase 8D of Oryza sativa subsp. japonica (Rice).